The chain runs to 204 residues: Large ribosomal subunit protein bL17 (204 aa).

The disordered stretch occupies residues 124–204; that stretch reads QAVGEAERAR…DDDGPAESKS (81 aa). Over residues 128 to 142 the composition is skewed to basic and acidic residues; sequence EAERARGTRFSERRK. Residues 156-191 are compositionally biased toward low complexity; that stretch reads SESPTAAAVAAQSAEEQAPVEETLTAQAAETSAATV. Residues 192-204 show a composition bias toward acidic residues; the sequence is EETDDDGPAESKS.

This sequence belongs to the bacterial ribosomal protein bL17 family. Part of the 50S ribosomal subunit. Contacts protein L32.

The chain is Large ribosomal subunit protein bL17 from Frankia alni (strain DSM 45986 / CECT 9034 / ACN14a).